The sequence spans 130 residues: Small ribosomal subunit protein uS9 (130 aa).

Over residues 105 to 115 the composition is skewed to basic and acidic residues; sequence TRDSRQVERKK. Residues 105–130 are disordered; it reads TRDSRQVERKKVGFRKSRKRTQFSKR. Residues 116 to 130 are compositionally biased toward basic residues; sequence VGFRKSRKRTQFSKR.

It belongs to the universal ribosomal protein uS9 family.

The sequence is that of Small ribosomal subunit protein uS9 from Buchnera aphidicola subsp. Schizaphis graminum (strain Sg).